The chain runs to 155 residues: UPF0266 membrane protein lin0773 (155 aa).

3 consecutive transmembrane segments (helical) span residues 8-28 (IFLF…DAVI), 46-66 (RWDG…NTFF), and 70-90 (PFST…ICFF).

This sequence belongs to the UPF0266 family.

It is found in the cell membrane. This Listeria innocua serovar 6a (strain ATCC BAA-680 / CLIP 11262) protein is UPF0266 membrane protein lin0773.